Reading from the N-terminus, the 1043-residue chain is Integrator complex subunit 3 (1043 aa).

N-acetylmethionine is present on M1. Phosphoserine occurs at positions 502, 537, and 995. The tract at residues 977-1043 (YEDSSTKPPK…GSSAVGSDSD (67 aa)) is disordered. Acidic residues predominate over residues 1008-1022 (AEEESGSSSASEEED).

It belongs to the Integrator subunit 3 family. As to quaternary structure, component of the Integrator complex, composed of core subunits INTS1, INTS2, INTS3, INTS4, INTS5, INTS6, INTS7, INTS8, INTS9/RC74, INTS10, INTS11/CPSF3L, INTS12, INTS13, INTS14 and INTS15. The core complex associates with protein phosphatase 2A subunits PPP2CA and PPP2R1A, to form the Integrator-PP2A (INTAC) complex. Component of the SOSS complex, composed of SOSS-B (SOSS-B1/NABP2 or SOSS-B2/NABP1), SOSS-A/INTS3 and SOSS-C/INIP. SOSS complexes containing SOSS-B1/NABP2 are more abundant than complexes containing SOSS-B2/NABP1. Interacts with SOSS-B1/NABP2, SOSS-B2/NABP1 and SOSS-C/INIP; the interaction is direct. Interacts with NBN/NBS1.

The protein localises to the nucleus. It is found in the cytoplasm. Functionally, component of the integrator complex, a multiprotein complex that terminates RNA polymerase II (Pol II) transcription in the promoter-proximal region of genes. The integrator complex provides a quality checkpoint during transcription elongation by driving premature transcription termination of transcripts that are unfavorably configured for transcriptional elongation: the complex terminates transcription by (1) catalyzing dephosphorylation of the C-terminal domain (CTD) of Pol II subunit POLR2A/RPB1 and SUPT5H/SPT5, (2) degrading the exiting nascent RNA transcript via endonuclease activity and (3) promoting the release of Pol II from bound DNA. The integrator complex is also involved in terminating the synthesis of non-coding Pol II transcripts, such as enhancer RNAs (eRNAs), small nuclear RNAs (snRNAs), telomerase RNAs and long non-coding RNAs (lncRNAs). Within the integrator complex, INTS3 is involved in the post-termination step: INTS3 binds INTS7 in the open conformation of integrator complex and prevents the rebinding of Pol II to the integrator after termination cycle. Mediates recruitment of cytoplasmic dynein to the nuclear envelope, probably as component of the integrator complex. In terms of biological role, component of the SOSS complex, a multiprotein complex that functions downstream of the MRN complex to promote DNA repair and G2/M checkpoint. The SOSS complex associates with single-stranded DNA at DNA lesions and influences diverse endpoints in the cellular DNA damage response including cell-cycle checkpoint activation, recombinational repair and maintenance of genomic stability. The SOSS complex is required for efficient homologous recombination-dependent repair of double-strand breaks (DSBs) and ATM-dependent signaling pathways. In the SOSS complex, it is required for the assembly of the complex and for stabilization of the complex at DNA damage sites. The sequence is that of Integrator complex subunit 3 from Homo sapiens (Human).